Here is a 43-residue protein sequence, read N- to C-terminus: Protein PsbN (43 aa).

A helical transmembrane segment spans residues 5–27 (TLIAISISGLLVSFTGYALYTAF).

Belongs to the PsbN family.

The protein localises to the plastid. It localises to the chloroplast thylakoid membrane. May play a role in photosystem I and II biogenesis. The polypeptide is Protein PsbN (Phaseolus vulgaris (Kidney bean)).